Reading from the N-terminus, the 250-residue chain is MNILITNDDGIASSGIKALEAVLQKEHDTFLIAPLRERSATSMALSIYDSMRVERINDNHYIVDGYPADCVNIGLHGDIFPRIDLVLSGINRGVNMGHDIHYSGTVGAARHGAVHSRLSLAVSSGNITKDYDYIREAEFVRYFIDEYSSLLKVGVVYNMNIPFDFVSSMENLRITRLGKRTYEDTYSKKNIIGGIADFYLGGSKLEHATEEGTDFTAFFSGKISLTPLSLDQTDISLVQELSDTLSKSLS.

Residues aspartate 8, aspartate 9, serine 39, and asparagine 91 each coordinate a divalent metal cation.

Belongs to the SurE nucleotidase family. The cofactor is a divalent metal cation.

The protein resides in the cytoplasm. It catalyses the reaction a ribonucleoside 5'-phosphate + H2O = a ribonucleoside + phosphate. Functionally, nucleotidase that shows phosphatase activity on nucleoside 5'-monophosphates. The protein is 5'-nucleotidase SurE of Leptospira borgpetersenii serovar Hardjo-bovis (strain L550).